We begin with the raw amino-acid sequence, 254 residues long: Imidazole glycerol phosphate synthase subunit HisF (254 aa).

Residues Asp12 and Asp131 contribute to the active site.

It belongs to the HisA/HisF family. As to quaternary structure, heterodimer of HisH and HisF.

The protein localises to the cytoplasm. The enzyme catalyses 5-[(5-phospho-1-deoxy-D-ribulos-1-ylimino)methylamino]-1-(5-phospho-beta-D-ribosyl)imidazole-4-carboxamide + L-glutamine = D-erythro-1-(imidazol-4-yl)glycerol 3-phosphate + 5-amino-1-(5-phospho-beta-D-ribosyl)imidazole-4-carboxamide + L-glutamate + H(+). It participates in amino-acid biosynthesis; L-histidine biosynthesis; L-histidine from 5-phospho-alpha-D-ribose 1-diphosphate: step 5/9. Its function is as follows. IGPS catalyzes the conversion of PRFAR and glutamine to IGP, AICAR and glutamate. The HisF subunit catalyzes the cyclization activity that produces IGP and AICAR from PRFAR using the ammonia provided by the HisH subunit. This chain is Imidazole glycerol phosphate synthase subunit HisF, found in Frankia casuarinae (strain DSM 45818 / CECT 9043 / HFP020203 / CcI3).